The chain runs to 293 residues: Mycothiol S-conjugate amidase (293 aa).

The Zn(2+) site is built by histidine 13, aspartate 16, and histidine 144.

It belongs to the MshB deacetylase family. Mca subfamily. In terms of assembly, monomer. Zn(2+) serves as cofactor.

It carries out the reaction mycothiol S-conjugate + H2O = an N-acetyl-L-cysteine-S-conjugate + 1D-myo-inositol 2-amino-2-deoxy-alpha-D-glucopyranoside. A mycothiol (MSH, N-acetylcysteinyl-glucosaminyl-inositol) S-conjugate amidase, it recycles conjugated MSH to the N-acetyl cysteine conjugate (AcCys S-conjugate, a mercapturic acid) and the MSH precursor. Involved in MSH-dependent detoxification of a number of alkylating agents and antibiotics. The protein is Mycothiol S-conjugate amidase of Streptomyces coelicolor (strain ATCC BAA-471 / A3(2) / M145).